The following is a 128-amino-acid chain: Disintegrin gabonin-1 (128 aa).

An N-terminal signal peptide occupies residues 1–20 (MIQVLLVIICLAVFPYQGSS). A propeptide spanning residues 21 to 47 (IILESGNVNDYEIVYPKKVTVLPTGAM) is cleaved from the precursor. In terms of domain architecture, Disintegrin spans 47-112 (MNSAHPCCDP…DCPRNPNKGE (66 aa)). Cystine bridges form between Cys-53–Cys-76, Cys-67–Cys-73, Cys-72–Cys-97, and Cys-85–Cys-104. Residues 89–91 (RGD) carry the Cell attachment site motif. The segment at 108–128 (PNKGESDELEWSAAATGSVLM) is disordered.

This sequence belongs to the disintegrin family. Dimeric disintegrin subfamily. Heterodimer with bitisgabonin (bitisgabonin-1 is the name of the heterodimer); disulfide-linked. Expressed by the venom gland.

The protein localises to the secreted. Its function is as follows. The heterodimer bitisgabonin-1 is a potent inhibitor of the adhesion of the RGD-dependent integrin alpha-5/beta-1 (ITGA5/ITGB1) to immobilized fibronectin. The protein is Disintegrin gabonin-1 of Bitis gabonica (Gaboon adder).